Consider the following 484-residue polypeptide: Phosphoenolpyruvate carboxylase (484 aa).

This sequence belongs to the PEPCase type 2 family. Homotetramer. Requires Mg(2+) as cofactor.

The enzyme catalyses oxaloacetate + phosphate = phosphoenolpyruvate + hydrogencarbonate. Catalyzes the irreversible beta-carboxylation of phosphoenolpyruvate (PEP) to form oxaloacetate (OAA), a four-carbon dicarboxylic acid source for the tricarboxylic acid cycle. In Methanospirillum hungatei JF-1 (strain ATCC 27890 / DSM 864 / NBRC 100397 / JF-1), this protein is Phosphoenolpyruvate carboxylase.